Consider the following 166-residue polypeptide: Large ribosomal subunit protein uL10 (166 aa).

Belongs to the universal ribosomal protein uL10 family. As to quaternary structure, part of the ribosomal stalk of the 50S ribosomal subunit. The N-terminus interacts with L11 and the large rRNA to form the base of the stalk. The C-terminus forms an elongated spine to which L12 dimers bind in a sequential fashion forming a multimeric L10(L12)X complex.

In terms of biological role, forms part of the ribosomal stalk, playing a central role in the interaction of the ribosome with GTP-bound translation factors. This Bacillus cereus (strain ATCC 14579 / DSM 31 / CCUG 7414 / JCM 2152 / NBRC 15305 / NCIMB 9373 / NCTC 2599 / NRRL B-3711) protein is Large ribosomal subunit protein uL10.